Consider the following 326-residue polypeptide: Malate dehydrogenase (326 aa).

12–18 (GGTGQIA) is an NAD(+) binding site. Positions 93 and 99 each coordinate substrate. NAD(+) contacts are provided by residues Asn-106, Gln-113, and 130-132 (VGN). The substrate site is built by Asn-132 and Arg-163. His-188 functions as the Proton acceptor in the catalytic mechanism.

The protein belongs to the LDH/MDH superfamily. MDH type 2 family.

It catalyses the reaction (S)-malate + NAD(+) = oxaloacetate + NADH + H(+). Catalyzes the reversible oxidation of malate to oxaloacetate. This Chlamydia trachomatis serovar D (strain ATCC VR-885 / DSM 19411 / UW-3/Cx) protein is Malate dehydrogenase.